Consider the following 345-residue polypeptide: RNA pseudouridine synthase 1 (345 aa).

The active site involves Asp134.

The protein belongs to the pseudouridine synthase RluA family.

The enzyme catalyses a uridine in RNA = a pseudouridine in RNA. The polypeptide is RNA pseudouridine synthase 1 (Oryza sativa subsp. japonica (Rice)).